Consider the following 363-residue polypeptide: Protein RecA (363 aa).

An ATP-binding site is contributed by 79–86 (GPESSGKT).

Belongs to the RecA family.

The protein resides in the cytoplasm. In terms of biological role, can catalyze the hydrolysis of ATP in the presence of single-stranded DNA, the ATP-dependent uptake of single-stranded DNA by duplex DNA, and the ATP-dependent hybridization of homologous single-stranded DNAs. It interacts with LexA causing its activation and leading to its autocatalytic cleavage. The sequence is that of Protein RecA from Borrelia duttonii (strain Ly).